A 376-amino-acid chain; its full sequence is MTEEYFIQGNDACARGAIKAGCRFFAGYPITPSTEIAEEMALLLPREGGVFVQMEDEIGALGAVIGAVWSGVRGMTATSGPGFSLMQEHVGYAAMTETPLVIVNVQRGSPSTGQPTMASQSDMMQARWGSHGDYEIIALSPSSVQECFDFTVRAFNLAEEYRVPVMVMGDEIVGHMREKITIPDRVKIRKRRGPSVPPEEFLPFSAPEDGVPEMPAFGDGYRIPVTGLTHDEGGYPDASNPEGHHRLVKRLCDKILRHRDRISDVQEELTEDAYITVISYGAPSRSVATAVKMAREDGVRAGYLKINTPWPFPETEVRAAAERSGKLLVVEMNLGQMFYEVQRVAAGMAEVELLPKIGGEIHRPEEILNMILKMNR.

Heterotetramer of the KorA, KorB, KorC and KorD subunits.

It catalyses the reaction 2 oxidized [2Fe-2S]-[ferredoxin] + 2-oxoglutarate + CoA = succinyl-CoA + 2 reduced [2Fe-2S]-[ferredoxin] + CO2 + H(+). The sequence is that of 2-oxoglutarate synthase subunit KorA (korA) from Methanothermobacter thermautotrophicus (strain ATCC 29096 / DSM 1053 / JCM 10044 / NBRC 100330 / Delta H) (Methanobacterium thermoautotrophicum).